Consider the following 394-residue polypeptide: Carbamoyltransferase HypF homolog (394 aa).

This sequence belongs to the carbamoyltransferase HypF family.

In Cupriavidus necator (strain ATCC 17699 / DSM 428 / KCTC 22496 / NCIMB 10442 / H16 / Stanier 337) (Ralstonia eutropha), this protein is Carbamoyltransferase HypF homolog (hypF1).